The sequence spans 1826 residues: MILKSFLLGNLVSLCMKIINSVVVVGLYYGFLTTFSIGPSYLFLLRAQVMEEGEEGTEKKVSATTGFITGQLMMFISIYYAPLHLALGRPHTITVLALPYLLFHFFWKNHKNFFDYGSTTRNSMRNLSIQCVFLNNLIFQLFNHFILPSSMLARLVNIYMFRCNNKMLFVTSSFVGWLIGHILFMKWVGLVLVWIRQNNSIRSNKYIRSNKSELINYMARIFSILLFITCVYYLGRIPSPIFTKKLNPQTEEGWESEEETDVEIETASETKGTKQEQEGSTEEDPSPSLFSEEKEDPDKIDETEEIRVNGKEKTKDEFHFTEIRYNNSPVYKGLFWFEKPLLTFLFDYKRWNRPLRYIKNNRFERTTRKEMSQYFFYTCRSDGKERISFTYPPSLSTFGEMIQRRMSLPTLEKLSSAELYNHWVYTNQHKNNNLNNEFLNRIEALDTGFFSLDILEKSTRLCNDKTRKYYLPKMYDPILNGLYRGTIQKKISPSIINKISLENFIETLEINKIHSLLLPDTDYQEFEQKIDQFDKKTFSTENRHLFTLISKLDRESGSRKGLSLFSEKEQGGVGSKKRDKFYKFLLNTILTSPNDQKTKQKFVIKEISKKVPRWSYKLITELEFLSGTAHEGLPLDYQIRSRKRDGIIIYRPTKRSRNASIKNWMSFRDYSEESDFRREFIKGSMRVQRRKTVIWKLFQANAHSPLFLDRIKKYPLFSFNIPERMKSFFRNCMGKGSGLKDYTEEQEDKIKEKASIKIAEAWDFIPYPQATRSLILIIQSIFRKYILLPSLIIVKNIGRILLSQPPEWTEDFDEWNREKHIICTYNGVQVSEFELPKNWFKDGIQIKIVFPFYLKPWHRSKLRTSFSSYKDLKKEEQPKFYFLTAWGAQTTLNFGSIPPKPSFFKPILKELKKKMQKTKNNNLKVLRVLKERTKDFLQDSKEPKEVIIKNVLFLFIKRIKKELFKIHPTRLFILKKVYESGETNKKKDYIIRNQQIHDSFIKIKSTDNKNDSLRDKKIKNLTDRTSTIRTKTKGLMKEKNSNAKKRGSPNKTSFNRKKKSPNILLKILKIKRRSTRLIYKFYLFITIFIKRIYIDIFVCIIHIARISTQLLLESINFCFDKYIYIYNNKTNKTNYNNKTNQEIKKKKEINFISTIKSALYNIQNSKRNSRLFFDLSSLSQAYVFYKLSQTPIIHFYKLRDIFEYNGTPFFLKTAMKNYFLTQGIFHSELRHTKLSSYETNQWKSWLRGHYQYNLSQIRWSGLIPKKWRTTINEGGMTPNKDLTKCNSYEKDRLLYHKKQKDFKVYPLPNQKDNFLKYYIYDLFSYKSINSEIKKSSYIFFGSPSELKNNQKIAFNYNKKKQNLSENLEEIPINHYLETGDIMYMKKNPDRKYFDWTILNFFIRQKIDIEAWTKMDYNSNINTKLGNTNYHKIYKMDKNAILSLTIHQDLERNPINDKKIFFDWMEMNEEILNPISTNLKLTFFPEFVPLYNVYKTKPWIIPSKLLLLNLNKKKNINENKKFHFFRPSNEKIYYELMNRNQEEKKTAGRRGLRSYAQNQDKMKKKYKIRNKMRREIIFLRKHYLLFQWIIDDGLIPKLTERMINNIKIYCYLLGLRNPRDTTISSIQRKELNLDIMVIRQKLTPIELNKKGIFFLDPTRLSVKNDGYFIIYQTVGISLVHKSKYQTPQRYREQRYINKKKLDESIPRYQIILRKRDKKHYDFVVPENILSSRRRRELRILLSFNSKNLNSVDKNPVFCNKKNIKRRNPFLDQKKHLDRDKNELIKLKLFLWPNYRLEDLACMNRYWFNTNNGSRFSILRIYPQFKIG.

The next 5 membrane-spanning stretches (helical) occupy residues 18–38 (IINSVVVVGLYYGFLTTFSIG), 67–87 (FITGQLMMFISIYYAPLHLAL), 127–147 (LSIQCVFLNNLIFQLFNHFIL), 175–195 (VGWLIGHILFMKWVGLVLVWI), and 221–241 (IFSILLFITCVYYLGRIPSPI). Positions 250–308 (TEEGWESEEETDVEIETASETKGTKQEQEGSTEEDPSPSLFSEEKEDPDKIDETEEIRV) are disordered. Composition is skewed to acidic residues over residues 252 to 266 (EGWESEEETDVEIET) and 293 to 304 (EKEDPDKIDETE). The chain crosses the membrane as a helical span at residues 774-794 (LILIIQSIFRKYILLPSLIIV). Positions 1032–1057 (TKGLMKEKNSNAKKRGSPNKTSFNRK) are disordered. Residues 1042-1057 (NAKKRGSPNKTSFNRK) are compositionally biased toward basic residues. The helical transmembrane segment at 1081-1101 (FYLFITIFIKRIYIDIFVCII) threads the bilayer.

This sequence belongs to the TIC214 family. As to quaternary structure, part of the Tic complex.

The protein resides in the plastid. Its subcellular location is the chloroplast inner membrane. Its function is as follows. Involved in protein precursor import into chloroplasts. May be part of an intermediate translocation complex acting as a protein-conducting channel at the inner envelope. This is Protein TIC 214 from Daucus carota (Wild carrot).